Reading from the N-terminus, the 837-residue chain is SLIT and NTRK-like protein 4 (837 aa).

Residues 1–18 form the signal peptide; the sequence is MFLWLFLIVSALISSTNA. Over 19-618 the chain is Extracellular; sequence DSDISVEICN…SPPGGPVPLS (600 aa). 6 LRR repeats span residues 60–81, 84–105, 108–129, 132–153, 156–177, and 179–200; these read NFYHLNFQNNFLNILYPNTFVN, HAVSLHLGNNKLQNIEGGAFLG, ALKQLHLNNNELKILRADTFLG, NLEYLQADYNLIKYIERGAFNK, KLKVLILNDNLISFLPDNIFRF, and SLTHLDIRGNRIQKLPYIGVLE. N-linked (GlcNAc...) asparagine glycosylation is present at N81. One can recognise an LRRCT 1 domain in the interval 213 to 264; it reads NPWNCSCDLLPLKAWLENMPYNIYIGEAICETPSDLYGRLLKETNKQELCPM. N-linked (GlcNAc...) asparagine glycosylation occurs at N325. The region spanning 333–375 is the LRRNT domain; that stretch reads QTRVPPLTPCPVPCFCKTHPSDLGLSVNCQEKNIQSMSELTPK. LRR repeat units follow at residues 378–399, 402–423, 426–447, 450–471, 474–495, and 497–518; these read NAKKLHVNGNNIKDVDISDFTE, GLDLLHLGSNQITLIKGEVFHN, NLRRLYLNGNQIERLYPEIFSG, NLQYLYLEYNLIKEILAGTFDS, NLQLLYLNNNLLKSLPVYIFSG, and PLARLNLRNNKFMYLPVSGVLD. The N-linked (GlcNAc...) asparagine glycan is linked to N423. An LRRCT 2 domain is found at 531–582; it reads NPWDCTCDLVALKLWLEKLNDGIVVKELKCETPVQFANIELKSLKNEILCPK. Residues 619-639 traverse the membrane as a helical segment; the sequence is ILILSILVVLILTVFVAFCLL. At 640 to 837 the chain is on the cytoplasmic side; the sequence is VFVLRRNKKP…LEEQTALNKI (198 aa).

The protein belongs to the SLITRK family. Interacts (via LRR 1 and 2 repeats) with PTPRD (via extracellular domain). In terms of tissue distribution, in the adult, significant expression is detected only in the brain. Broadly expressed in embryonic brain with highest expression in subventricular zone, subplate, cortical plate, pyramidal cell layer of hippocampus, thalamus and hypothalamus.

The protein resides in the membrane. Its subcellular location is the cell membrane. In terms of biological role, it is involved in synaptogenesis and promotes synapse differentiation. Suppresses neurite outgrowth. The protein is SLIT and NTRK-like protein 4 (Slitrk4) of Mus musculus (Mouse).